The following is a 109-amino-acid chain: Set1 complex component sdc1 (109 aa).

Residues 49–109 (QQKQKEIVNQ…SSNPGKNSAS (61 aa)) are disordered. Residues 73-87 (STPTMAEQVQTSFSN) are compositionally biased toward polar residues. Over residues 88–101 (PASTPLTQTSSPSS) the composition is skewed to low complexity.

Belongs to the dpy-30 family. In terms of assembly, component of the COMPASS (Set1C) complex composed of ash2, sdc1, set1, shg1, spp1, swd1, swd2 and swd3. Component of the Lid2 complex composed of ash2, jmj3, lid2, sdc1 and snt2.

It is found in the nucleus. Its function is as follows. The COMPASS (Set1C) complex specifically mono-, di- and trimethylates histone H3 to form H3K4me1/2/3, which subsequently activates gene expression by regulating transcription elongation and plays a role in telomere length maintenance. The chain is Set1 complex component sdc1 (sdc1) from Schizosaccharomyces pombe (strain 972 / ATCC 24843) (Fission yeast).